We begin with the raw amino-acid sequence, 414 residues long: Translation initiation factor 2 subunit gamma (414 aa).

One can recognise a tr-type G domain in the interval 8-206; sequence QPEVNIGVVG…AIEKFIPTPP (199 aa). The segment at 17-24 is G1; sequence GHVDHGKT. Mg(2+)-binding residues include aspartate 20, threonine 24, glycine 45, and threonine 47. 20-25 serves as a coordination point for GTP; that stretch reads DHGKTT. The segment at 45–49 is G2; it reads GMTIK. The Zn(2+) site is built by cysteine 60, cysteine 63, cysteine 75, and cysteine 77. The G3 stretch occupies residues 93–96; that stretch reads DAPG. Residues 149-152 and 184-186 each bind GTP; these read NKVD and SAL. Residues 149-152 are G4; it reads NKVD. The tract at residues 184 to 186 is G5; that stretch reads SAL.

The protein belongs to the TRAFAC class translation factor GTPase superfamily. Classic translation factor GTPase family. EIF2G subfamily. In terms of assembly, heterotrimer composed of an alpha, a beta and a gamma chain. Mg(2+) is required as a cofactor.

The enzyme catalyses GTP + H2O = GDP + phosphate + H(+). EIF-2 functions in the early steps of protein synthesis by forming a ternary complex with GTP and initiator tRNA. The sequence is that of Translation initiation factor 2 subunit gamma from Aeropyrum pernix (strain ATCC 700893 / DSM 11879 / JCM 9820 / NBRC 100138 / K1).